We begin with the raw amino-acid sequence, 342 residues long: MAHVGAVVAAMAGLMAILLHSSIHKIEEGHLAVYYRGGALLTSPNGPGYHIMLPFITSYRSVQTTLQTDEIKNVPCGTSGGVMIYFDRIEVVNMLIPTSVVDIVRNYTADYDKTLIFNKIHHELNQFCSVHTLQEVYIELFDIIDENLKTALQKDLNCMAPGLTIQAVRVTKPKIPEAIRRNYELMEAEKTRLLITVQTQKVVEKEAETERKKAIIEAQKVAQVAEIQFQQKVMEKETEKKISEIEDAAFLAREKARADAEYYTAAKFAEANTLKLTPEYLQLMKYQAIAANSKIYFGQDIPNMFVDSSASRPAAGESEQLESLSMRESLKKASKPKASEGH.

Over 1-6 (MAHVGA) the chain is Cytoplasmic. A helical membrane pass occupies residues 7–23 (VVAAMAGLMAILLHSSI). At 24-342 (HKIEEGHLAV…ASKPKASEGH (319 aa)) the chain is on the lumenal side. A glycan (N-linked (GlcNAc...) asparagine) is linked at N106. The segment at 308 to 342 (SSASRPAAGESEQLESLSMRESLKKASKPKASEGH) is disordered.

It belongs to the band 7/mec-2 family.

It localises to the endoplasmic reticulum membrane. Mediates the endoplasmic reticulum-associated degradation (ERAD) of inositol 1,4,5-trisphosphate receptors (IP3Rs). Involved in regulation of cellular cholesterol homeostasis by regulation the SREBP signaling pathway. Binds cholesterol and may promote ER retention of the SCAP-SREBF complex. The protein is Erlin-1 of Danio rerio (Zebrafish).